Consider the following 655-residue polypeptide: tRNA-guanine(15) transglycosylase (655 aa).

Asp89 acts as the Nucleophile in catalysis. Residues Asp124 and Ala195 each contribute to the substrate site. Cys281, Cys283, and Cys286 together coordinate Zn(2+). One can recognise a PUA domain in the interval 577 to 652; that stretch reads KYRVVVNKEA…LAVKVRGGLK (76 aa).

The protein belongs to the archaeosine tRNA-ribosyltransferase family. It depends on Zn(2+) as a cofactor.

It carries out the reaction guanosine(15) in tRNA + 7-cyano-7-deazaguanine = 7-cyano-7-carbaguanosine(15) in tRNA + guanine. It functions in the pathway tRNA modification; archaeosine-tRNA biosynthesis. Functionally, exchanges the guanine residue with 7-cyano-7-deazaguanine (preQ0) at position 15 in the dihydrouridine loop (D-loop) of archaeal tRNAs. Can also utilize guanine as substrate. This Methanocaldococcus jannaschii (strain ATCC 43067 / DSM 2661 / JAL-1 / JCM 10045 / NBRC 100440) (Methanococcus jannaschii) protein is tRNA-guanine(15) transglycosylase.